Here is a 177-residue protein sequence, read N- to C-terminus: uncharacterized protein (177 aa).

It to M.jannaschii MJ0628.

This is an uncharacterized protein from Methanocaldococcus jannaschii (strain ATCC 43067 / DSM 2661 / JAL-1 / JCM 10045 / NBRC 100440) (Methanococcus jannaschii).